Consider the following 1071-residue polypeptide: SLIT-ROBO Rho GTPase-activating protein 2 (1071 aa).

Positions 22-325 constitute an F-BAR domain; the sequence is KEIRAQLTEQ…AVENLDATSD (304 aa). Residues 181–203 are compositionally biased toward basic and acidic residues; it reads LKEAEKQEEKQIGKSVKQEDRQT. Positions 181–211 are disordered; sequence LKEAEKQEEKQIGKSVKQEDRQTPRSPDSTA. Serine 206 is modified (phosphoserine). A coiled-coil region spans residues 363–401; sequence QSELVQRCQQLQSRLSTLKIENEEVKKTMEATLQTIQDI. Serine 427, serine 500, serine 691, and serine 695 each carry phosphoserine. Residues 489-679 enclose the Rho-GAP domain; the sequence is ARRSSTVRKQ…TIIIQHENIF (191 aa). A disordered region spans residues 700 to 726; it reads CDSTHGETTSAEDSTQDVTAEHHTSDD. Polar residues predominate over residues 705–717; it reads GETTSAEDSTQDV. The residue at position 724 (serine 724) is a Phosphoserine. The SH3 domain occupies 728-787; sequence CEPIEAIAKFDYVGRTARELSFKKGASLLLYQRASDDWWEGRHNGIDGLIPHQYIVVQDT. Serine 795 carries the post-translational modification Phosphoserine. 2 disordered regions span residues 795–819 and 838–918; these read SSPKSEIEVMSEPPEEKVTARTGAS and RKRP…DSPQ. A compositionally biased stretch (low complexity) spans 855–868; the sequence is HGLGSSLTDSSSLG. Composition is skewed to polar residues over residues 874–885 and 897–907; these read RPSSQPIMSQNL and GHGSLNSISRH. A Phosphoserine modification is found at serine 916. Symmetric dimethylarginine; by PRMT5 is present on arginine 927. Serine 930 is modified (phosphoserine). The stretch at 940–968 forms a coiled coil; that stretch reads EVIAQDIEATMNSALNELQELERQSSAKH. The tract at residues 984-1012 is disordered; the sequence is PVVAPTSEPSSPLHTQLLKDPEPAFQRSA. Phosphoserine occurs at positions 990, 994, 1013, and 1027. Residues 1029-1071 are disordered; sequence KMAAPVKPPATRPKPTVFPKTNATSPGVNSSASPQATDKSCTV. Residues 1047 to 1071 show a composition bias toward polar residues; sequence PKTNATSPGVNSSASPQATDKSCTV.

Homodimer. Forms a heterooligomer with SRGAP1 and SRGAP3 through its F-BAR domain. Interacts (via SH3 domain) with GPHN. Interacts (via SH3 domain) with FMNL1 (activated by RAC1); regulates the actin filament severing activity of FMNL1 and actin dynamics. Interacts (via SH3 domain) with FMNL3. Interacts with RAC1; specifically stimulates RAC1 GTPase activity. Interacts (via F-BAR domain) with HOMER1. Interacts with ROBO1 and ROBO2. Interacts with FASLG. Interacts with PRMT5. Post-translationally, methylation at Arg-927 is required for the stimulation of cell migration, dimerization and localization at the plasma membrane protrusions.

It localises to the cell membrane. The protein resides in the cell projection. The protein localises to the dendritic spine. It is found in the postsynaptic density. Its subcellular location is the postsynaptic cell membrane. It localises to the lamellipodium. The protein resides in the cytoplasmic vesicle. The protein localises to the phagosome. It is found in the nucleus. Its subcellular location is the cytoplasm. It localises to the cytosol. In terms of biological role, postsynaptic RAC1 GTPase activating protein (GAP) that plays a key role in neuronal morphogenesis and migration mainly during development of the cerebral cortex. Regulates excitatory and inhibitory synapse maturation and density in cortical pyramidal neurons. SRGAP2/SRGAP2A limits excitatory and inhibitory synapse density through its RAC1-specific GTPase activating activity, while it promotes maturation of both excitatory and inhibitory synapses through its ability to bind to the postsynaptic scaffolding protein HOMER1 at excitatory synapses, and the postsynaptic protein GPHN at inhibitory synapses. Mechanistically, acts by binding and deforming membranes, thereby regulating actin dynamics to regulate cell migration and differentiation. Promotes cell repulsion and contact inhibition of locomotion: localizes to protrusions with curved edges and controls the duration of RAC1 activity in contact protrusions. In non-neuronal cells, may also play a role in cell migration by regulating the formation of lamellipodia and filopodia. This chain is SLIT-ROBO Rho GTPase-activating protein 2, found in Mus musculus (Mouse).